The sequence spans 641 residues: Soluble starch synthase 1, chloroplastic/amyloplastic (641 aa).

Residues 1 to 113 (MATAAGMGIG…DSIDKTIFVA (113 aa)) constitute a chloroplast transit peptide. A disordered region spans residues 62 to 96 (TFLVPTSTPPAPTQSPAPAPTPPPLPDSGVGEIEP). A compositionally biased stretch (pro residues) spans 68–87 (STPPAPTQSPAPAPTPPPLP). Lysine 147 contributes to the ADP-alpha-D-glucose binding site.

The protein belongs to the glycosyltransferase 1 family. Bacterial/plant glycogen synthase subfamily. In terms of tissue distribution, leaves and immature seeds.

It localises to the plastid. It is found in the chloroplast. Its subcellular location is the amyloplast. The catalysed reaction is [(1-&gt;4)-alpha-D-glucosyl](n) + ADP-alpha-D-glucose = [(1-&gt;4)-alpha-D-glucosyl](n+1) + ADP + H(+). It participates in glycan biosynthesis; starch biosynthesis. Functionally, involved in starch synthesis in endosperm amyloplasts. Plays a role in the elongation of amylopectin chains. Synthesizes preferentially amylopectin chains with a degree of polymerization (DP) of 7 to 11 by elongating chains with a DP of 4 to 7. Generates distincly chains with a DP of 8 to 12 chains from short chains with a DP of 6 to 7. In Oryza sativa subsp. japonica (Rice), this protein is Soluble starch synthase 1, chloroplastic/amyloplastic.